The chain runs to 577 residues: Sulfite reductase [NADPH] hemoprotein beta-component (577 aa).

[4Fe-4S] cluster is bound by residues Cys-440, Cys-446, Cys-486, and Cys-490. Siroheme is bound at residue Cys-490.

Belongs to the nitrite and sulfite reductase 4Fe-4S domain family. In terms of assembly, alpha(8)-beta(8). The alpha component is a flavoprotein, the beta component is a hemoprotein. It depends on siroheme as a cofactor. [4Fe-4S] cluster is required as a cofactor.

The catalysed reaction is hydrogen sulfide + 3 NADP(+) + 3 H2O = sulfite + 3 NADPH + 4 H(+). It participates in sulfur metabolism; hydrogen sulfide biosynthesis; hydrogen sulfide from sulfite (NADPH route): step 1/1. Its function is as follows. Component of the sulfite reductase complex that catalyzes the 6-electron reduction of sulfite to sulfide. This is one of several activities required for the biosynthesis of L-cysteine from sulfate. This Vibrio cholerae serotype O1 (strain ATCC 39315 / El Tor Inaba N16961) protein is Sulfite reductase [NADPH] hemoprotein beta-component.